The primary structure comprises 382 residues: Glutamyl-tRNA reductase (382 aa).

Substrate is bound by residues Thr-38–Arg-41, Ser-85, Glu-90–Gln-92, and Gln-96. Catalysis depends on Cys-39, which acts as the Nucleophile. Gly-164–Gly-169 serves as a coordination point for NADP(+).

It belongs to the glutamyl-tRNA reductase family. As to quaternary structure, homodimer.

It carries out the reaction (S)-4-amino-5-oxopentanoate + tRNA(Glu) + NADP(+) = L-glutamyl-tRNA(Glu) + NADPH + H(+). It functions in the pathway porphyrin-containing compound metabolism; protoporphyrin-IX biosynthesis; 5-aminolevulinate from L-glutamyl-tRNA(Glu): step 1/2. Its function is as follows. Catalyzes the NADPH-dependent reduction of glutamyl-tRNA(Glu) to glutamate 1-semialdehyde (GSA). This chain is Glutamyl-tRNA reductase, found in Methanococcus maripaludis (strain C6 / ATCC BAA-1332).